A 71-amino-acid chain; its full sequence is Disintegrin halysin (71 aa).

The Disintegrin domain maps to E1 to F71. 6 disulfides stabilise this stretch: C6/C21, C8/C16, C15/C38, C29/C35, C34/C59, and C47/C66. The short motif at R51 to D53 is the Cell attachment site element.

It belongs to the venom metalloproteinase (M12B) family. P-II subfamily. P-IIa sub-subfamily. Monomer. As to expression, expressed by the venom gland.

It is found in the secreted. Inhibits fibrinogen interaction with platelets. Acts by binding to alpha-IIb/beta-3 (ITGA2B/ITGB3) on the platelet surface and inhibits aggregation induced by ADP, thrombin, platelet-activating factor and collagen. The polypeptide is Disintegrin halysin (Gloydius blomhoffii (Mamushi)).